Consider the following 189-residue polypeptide: Pyridoxal 5'-phosphate synthase subunit PdxT (189 aa).

48–50 (GES) contacts L-glutamine. Catalysis depends on Cys-80, which acts as the Nucleophile. L-glutamine-binding positions include Arg-107 and 136–137 (IR). Residues His-172 and Glu-174 each act as charge relay system in the active site.

The protein belongs to the glutaminase PdxT/SNO family. In terms of assembly, in the presence of PdxS, forms a dodecamer of heterodimers. Only shows activity in the heterodimer.

The enzyme catalyses aldehydo-D-ribose 5-phosphate + D-glyceraldehyde 3-phosphate + L-glutamine = pyridoxal 5'-phosphate + L-glutamate + phosphate + 3 H2O + H(+). It catalyses the reaction L-glutamine + H2O = L-glutamate + NH4(+). It functions in the pathway cofactor biosynthesis; pyridoxal 5'-phosphate biosynthesis. In terms of biological role, catalyzes the hydrolysis of glutamine to glutamate and ammonia as part of the biosynthesis of pyridoxal 5'-phosphate. The resulting ammonia molecule is channeled to the active site of PdxS. This Ruminiclostridium cellulolyticum (strain ATCC 35319 / DSM 5812 / JCM 6584 / H10) (Clostridium cellulolyticum) protein is Pyridoxal 5'-phosphate synthase subunit PdxT.